The following is an 862-amino-acid chain: Protein translocase subunit SecA (862 aa).

ATP-binding positions include glutamine 86, 104-108, and aspartate 499; that span reads GEGKT. 4 residues coordinate Zn(2+): cysteine 848, cysteine 850, cysteine 859, and histidine 860.

Belongs to the SecA family. In terms of assembly, monomer and homodimer. Part of the essential Sec protein translocation apparatus which comprises SecA, SecYEG and auxiliary proteins SecDF-YajC and YidC. It depends on Zn(2+) as a cofactor.

It localises to the cell inner membrane. The protein resides in the cytoplasm. It carries out the reaction ATP + H2O + cellular proteinSide 1 = ADP + phosphate + cellular proteinSide 2.. Its function is as follows. Part of the Sec protein translocase complex. Interacts with the SecYEG preprotein conducting channel. Has a central role in coupling the hydrolysis of ATP to the transfer of proteins into and across the cell membrane, serving both as a receptor for the preprotein-SecB complex and as an ATP-driven molecular motor driving the stepwise translocation of polypeptide chains across the membrane. The polypeptide is Protein translocase subunit SecA (Ehrlichia canis (strain Jake)).